A 378-amino-acid chain; its full sequence is Glutamate 5-kinase 1 (378 aa).

Position 13 (lysine 13) interacts with ATP. Residues serine 53, aspartate 140, and asparagine 152 each coordinate substrate. ATP is bound at residue 172–173; sequence SD. In terms of domain architecture, PUA spans 278–355; it reads AGRLTVDAGA…AEIETVLGYE (78 aa).

It belongs to the glutamate 5-kinase family.

The protein resides in the cytoplasm. The enzyme catalyses L-glutamate + ATP = L-glutamyl 5-phosphate + ADP. The protein operates within amino-acid biosynthesis; L-proline biosynthesis; L-glutamate 5-semialdehyde from L-glutamate: step 1/2. In terms of biological role, catalyzes the transfer of a phosphate group to glutamate to form L-glutamate 5-phosphate. The protein is Glutamate 5-kinase 1 of Mesorhizobium japonicum (strain LMG 29417 / CECT 9101 / MAFF 303099) (Mesorhizobium loti (strain MAFF 303099)).